The primary structure comprises 528 residues: Probable rhamnogalacturonate lyase A (528 aa).

Positions 1–20 (MLSRTILFSTSFLWVRVANA) are cleaved as a signal peptide. 2 cysteine pairs are disulfide-bonded: cysteine 50–cysteine 93 and cysteine 184–cysteine 193.

The protein belongs to the polysaccharide lyase 4 family.

Its subcellular location is the secreted. The enzyme catalyses Endotype eliminative cleavage of L-alpha-rhamnopyranosyl-(1-&gt;4)-alpha-D-galactopyranosyluronic acid bonds of rhamnogalacturonan I domains in ramified hairy regions of pectin leaving L-rhamnopyranose at the reducing end and 4-deoxy-4,5-unsaturated D-galactopyranosyluronic acid at the non-reducing end.. Pectinolytic enzymes consist of four classes of enzymes: pectin lyase, polygalacturonase, pectin methylesterase and rhamnogalacturonase. Degrades the rhamnogalacturonan I (RG-I) backbone of pectin. This Aspergillus flavus (strain ATCC 200026 / FGSC A1120 / IAM 13836 / NRRL 3357 / JCM 12722 / SRRC 167) protein is Probable rhamnogalacturonate lyase A (rglA).